Consider the following 475-residue polypeptide: Bifunctional purple acid phosphatase 26 (475 aa).

Positions 1–30 (MNHLVIISVFLSSVLLLYRGESGITSSFIR) are cleaved as a signal peptide. Asn103 is a glycosylation site (N-linked (GlcNAc...) asparagine). Fe cation is bound by residues Asp162, Asp189, and Tyr192. Zn(2+) is bound at residue Asp189. Zn(2+) is bound by residues Asn227 and His312. A substrate-binding site is contributed by Asn227. His322 (proton donor) is an active-site residue. His349 contributes to the Zn(2+) binding site. Residue 349–351 (HVH) coordinates substrate. His351 is a Fe cation binding site. N-linked (GlcNAc...) asparagine glycosylation is found at Asn365 and Asn422.

Belongs to the metallophosphoesterase superfamily. Purple acid phosphatase family. Homodimer. It depends on Fe cation as a cofactor. Zn(2+) is required as a cofactor. In terms of processing, glycosylated. As to expression, expressed in roots, stems, leaves, flowers and siliques.

It localises to the vacuole. It carries out the reaction a phosphate monoester + H2O = an alcohol + phosphate. It catalyses the reaction 2 a phenolic donor + H2O2 = 2 a phenolic radical donor + 2 H2O. With respect to regulation, activated by Mg(2+), Co(2+), Mn(2+) and Ba(2+). Inhibited by Fe(2+), Cu(2+), Zn(2+), NaF, molybdate, arsenate, vanadate and inorganic phosphate. No effect of tartrate, Asp, Gln, glutathione, Asn, ascorbic acid and phosphite. In terms of biological role, metallo-phosphoesterase involved in phosphate metabolism. Acid phosphatase activity with phosphoenolpyruvate, inorganic pyrophosphate, phenyl-phosphate and p-nitrophenyl-phosphate as the most effective substrates. No activity with phytic acid, phosphocholine or bis-p-nitrophenyl-phosphate. Has a peroxidase activity at alkaline pH. This Arabidopsis thaliana (Mouse-ear cress) protein is Bifunctional purple acid phosphatase 26 (PAP26).